A 271-amino-acid chain; its full sequence is Glutamate racemase (271 aa).

Substrate is bound by residues 12 to 13 (DS) and 44 to 45 (YG). Cys-75 acts as the Proton donor/acceptor in catalysis. 76–77 (NS) is a substrate binding site. Cys-185 (proton donor/acceptor) is an active-site residue. 186 to 187 (TH) contributes to the substrate binding site.

This sequence belongs to the aspartate/glutamate racemases family.

The catalysed reaction is L-glutamate = D-glutamate. The protein operates within cell wall biogenesis; peptidoglycan biosynthesis. Functionally, provides the (R)-glutamate required for cell wall biosynthesis. In Mycobacterium bovis (strain BCG / Pasteur 1173P2), this protein is Glutamate racemase.